A 164-amino-acid chain; its full sequence is Small ribosomal subunit protein uS5 (164 aa).

Residues 10-73 enclose the S5 DRBM domain; that stretch reads LEERVVAVNR…DDAKKNLIEV (64 aa).

It belongs to the universal ribosomal protein uS5 family. In terms of assembly, part of the 30S ribosomal subunit. Contacts proteins S4 and S8.

With S4 and S12 plays an important role in translational accuracy. Its function is as follows. Located at the back of the 30S subunit body where it stabilizes the conformation of the head with respect to the body. The polypeptide is Small ribosomal subunit protein uS5 (Streptococcus pneumoniae serotype 2 (strain D39 / NCTC 7466)).